An 881-amino-acid polypeptide reads, in one-letter code: Tyrosine-protein kinase receptor TYRO3 (881 aa).

An N-terminal signal peptide occupies residues 1–28 (MVNPGPPGLIAGLLLAALSLSSVDGTKA). Ig-like C2-type domains follow at residues 29–114 (LGFV…KSVS) and 125–206 (PYFT…AIVE). The Extracellular segment spans residues 29 to 414 (LGFVGHGYNM…QRHPHTRMSW (386 aa)). Residues N37 and N49 are each glycosylated (N-linked (GlcNAc...) asparagine). Residues C50 and C103 are joined by a disulfide bond. N-linked (GlcNAc...) asparagine glycosylation is present at N143. C146 and C189 are disulfide-bonded. 2 Fibronectin type-III domains span residues 213–306 (PPFN…TKEK) and 311–401 (IPQN…SKEE). N216, N279, N351, and N365 each carry an N-linked (GlcNAc...) asparagine glycan. A helical transmembrane segment spans residues 415–435 (VPMVLGILTALVTVVAMTLIF). Over 436–881 (LRKGRKETRF…MQEEQVVITL (446 aa)) the chain is Cytoplasmic. The 272-residue stretch at 503 to 774 (FTLGRTLGKG…VDLKRRLEAI (272 aa)) folds into the Protein kinase domain. ATP is bound by residues 509–517 (LGKGEFGSV) and K535. The active-site Proton acceptor is the D640. Y671 carries the phosphotyrosine; by autocatalysis modification. Residues 846–881 (EWSSSAQNGEARGLLHEEEEEEEEEEMQEEQVVITL) form a disordered region. Residues 862–874 (EEEEEEEEEEMQE) are compositionally biased toward acidic residues.

This sequence belongs to the protein kinase superfamily. Tyr protein kinase family. AXL/UFO subfamily. Tyrosine phosphorylated upon receptor stimulation.

Its subcellular location is the cell membrane. It catalyses the reaction L-tyrosyl-[protein] + ATP = O-phospho-L-tyrosyl-[protein] + ADP + H(+). Functionally, may be involved in cell adhesion processes, particularly in the central nervous system. This chain is Tyrosine-protein kinase receptor TYRO3 (tyro3), found in Xenopus tropicalis (Western clawed frog).